A 142-amino-acid polypeptide reads, in one-letter code: ATP synthase epsilon chain (142 aa).

The protein belongs to the ATPase epsilon chain family. F-type ATPases have 2 components, CF(1) - the catalytic core - and CF(0) - the membrane proton channel. CF(1) has five subunits: alpha(3), beta(3), gamma(1), delta(1), epsilon(1). CF(0) has three main subunits: a, b and c.

It is found in the cell membrane. In terms of biological role, produces ATP from ADP in the presence of a proton gradient across the membrane. The sequence is that of ATP synthase epsilon chain from Lactiplantibacillus plantarum (strain ATCC BAA-793 / NCIMB 8826 / WCFS1) (Lactobacillus plantarum).